The following is a 478-amino-acid chain: Calcitonin receptor (478 aa).

A signal peptide spans 1–22 (MRFTFTRQFLAFFILISNPASI). Residues 23-146 (LPRSENLTFP…FTPEKLQNAY (124 aa)) lie on the Extracellular side of the membrane. N-linked (GlcNAc...) asparagine glycans are attached at residues Asn28, Asn73, Asn125, and Asn130. Intrachain disulfides connect Cys55–Cys81, Cys72–Cys112, and Cys95–Cys134. Residues 147–169 (VLYYLAIVGHSMSIITLVVSLGI) form a helical membrane-spanning segment. Residues 170 to 181 (FVYFRSLGCQRV) lie on the Cytoplasmic side of the membrane. Residues 182-202 (TLHKNMFLTYILNSMIIIIHL) form a helical membrane-spanning segment. Topologically, residues 203–219 (VEVVPNGELVRKDPVSC) are extracellular. A disulfide bridge connects residues Cys219 and Cys289. Residues 220–242 (KILHFFHQYMMACNYFWMLCEGI) traverse the membrane as a helical segment. The Cytoplasmic segment spans residues 243-259 (YLHTLIVVSVFNEAKHL). The chain crosses the membrane as a helical span at residues 260–280 (RWYYLLGWGFPLVPTTIHAIT). Residues 281 to 296 (RALYFNDNCWISVDTH) are Extracellular-facing. Residues 297–320 (LLYIIHGPVMVALVVNFFFLLNIV) form a helical membrane-spanning segment. Residues 321-340 (RVLVTKMRETHEAESYMYLK) are Cytoplasmic-facing. A helical membrane pass occupies residues 341 to 359 (AVKATMILVPLLGIQFVVF). The Extracellular segment spans residues 360–367 (PWRPSNKV). Residues 368–394 (LGKIYDYFMHSLIHFQGFFVATIYCFC) form a helical membrane-spanning segment. The Cytoplasmic portion of the chain corresponds to 395 to 478 (NNEVQTTLKR…LNIIEKESSA (84 aa)).

This sequence belongs to the G-protein coupled receptor 2 family. Heterodimer of CALCR and RAMP1, RAMP2 or RAMP3; the receptor complexes function as AMYR1, AMYR2 and AMYR3 receptors, respectively, and respond to amylin/IAPP, calcitonin/CT and CGRP1 ligands. Interacts with GPRASP2.

The protein localises to the cell membrane. Functionally, g protein-coupled receptor activated by ligand peptides amylin (IAPP), calcitonin (CT/CALCA) and calcitonin gene-related peptide type 1 (CGRP1/CALCA). CALCR interacts with receptor-activity-modifying proteins RAMP1, 2 and 3 to form receptor complexes AMYR1, 2 and 3, respectively. IAPP, CT and CGRP1 activate CALCR and AMYRs with distinct modes of receptor activation resulting in specific phenotypes. Ligand binding causes a conformation change that triggers signaling via guanine nucleotide-binding proteins (G proteins) and modulates the activity of downstream effectors. Activates cAMP-dependent pathway. The chain is Calcitonin receptor from Cavia porcellus (Guinea pig).